Here is a 243-residue protein sequence, read N- to C-terminus: Voltage-gated monoatomic cation channel TMEM109 (243 aa).

The N-terminal stretch at 1 to 33 (MAGSGSSAPWGKHLLHAVLMVLVALVLLHSALA) is a signal peptide. Residues 34–83 (QSHRDFAPPGQQRREAPVDLLTQIGRSVRETLDTWIGPETMHLISETLSQ) are Lumenal-facing. The chain crosses the membrane as a helical span at residues 84–104 (VMWAISSAISVAFFALSGIAA). Over 105 to 135 (QLLTALGLDGDHLTQGLKLSPSQVQTFLLWG) the chain is Cytoplasmic. A helical membrane pass occupies residues 136–156 (AGALVVYWLLSLLLGLVLAVL). At 157–185 (GRILGGLKLVIFLAGFVALVRSVPDPSTR) the chain is on the lumenal side. A helical membrane pass occupies residues 186-205 (ALLLLALLTLYALLSRLTGS). Residues 206-243 (RASGAQLEAKVRGLERQVDELRWRQRRAAKGARSVEEE) lie on the Cytoplasmic side of the membrane.

As to quaternary structure, homooligomer. Interacts with CRYAB; in the cellular response to DNA damage. The N-terminus is blocked. In terms of tissue distribution, widely expressed. Expressed in skeletal, cardiac and smooth muscle cells, in brain, including neuroglial cells, cerebral cortex neurons and cerebellum, but not Purkinje cells. Also detected in Paneth and Goblet cells of the small intestine (but not in the epithelium), duodenal gland, pancreas, parotid gland, testis, thyroid gland and adrenal gland, as well as in epidermis, choroid plexus, ductus epididymidis, lymphocytes, fibroblasts, endothelial cells and seminiferous epithelial cells (at protein level). Not detected in mucous cells of the duodenal gland, in hepatocytes nor in uriniferous tubules.

The protein localises to the nucleus outer membrane. Its subcellular location is the endoplasmic reticulum membrane. It localises to the sarcoplasmic reticulum membrane. The enzyme catalyses K(+)(in) = K(+)(out). It catalyses the reaction Ca(2+)(in) = Ca(2+)(out). In terms of biological role, functions as a voltage-gated monoatomic cation channel permeable to both potassium and calcium. Plays a role in the cellular response to DNA damage. The sequence is that of Voltage-gated monoatomic cation channel TMEM109 from Oryctolagus cuniculus (Rabbit).